Reading from the N-terminus, the 229-residue chain is Uracil-DNA glycosylase (229 aa).

D64 serves as the catalytic Proton acceptor.

It belongs to the uracil-DNA glycosylase (UDG) superfamily. UNG family. Monomer.

The protein localises to the cytoplasm. The enzyme catalyses Hydrolyzes single-stranded DNA or mismatched double-stranded DNA and polynucleotides, releasing free uracil.. Its function is as follows. Excises uracil residues from the DNA which can arise as a result of misincorporation of dUMP residues by DNA polymerase or due to deamination of cytosine. This is Uracil-DNA glycosylase from Escherichia coli O157:H7.